A 217-amino-acid polypeptide reads, in one-letter code: tRNA (guanine-N(7)-)-methyltransferase (217 aa).

Glu44, Glu69, Asp96, and Asp118 together coordinate S-adenosyl-L-methionine. Asp118 is a catalytic residue. Residue Lys122 participates in substrate binding. Residues 124–129 (RHEKRR) form an interaction with RNA region. Residues Asp154 and 191–194 (TEYE) each bind substrate.

Belongs to the class I-like SAM-binding methyltransferase superfamily. TrmB family.

It catalyses the reaction guanosine(46) in tRNA + S-adenosyl-L-methionine = N(7)-methylguanosine(46) in tRNA + S-adenosyl-L-homocysteine. It functions in the pathway tRNA modification; N(7)-methylguanine-tRNA biosynthesis. Catalyzes the formation of N(7)-methylguanine at position 46 (m7G46) in tRNA. The polypeptide is tRNA (guanine-N(7)-)-methyltransferase (Bacillus velezensis (strain DSM 23117 / BGSC 10A6 / LMG 26770 / FZB42) (Bacillus amyloliquefaciens subsp. plantarum)).